Consider the following 793-residue polypeptide: Probable phosphoketolase (793 aa).

It belongs to the XFP family. Requires thiamine diphosphate as cofactor.

This is Probable phosphoketolase from Gloeobacter violaceus (strain ATCC 29082 / PCC 7421).